A 1064-amino-acid polypeptide reads, in one-letter code: Isoleucine--tRNA ligase, cytoplasmic (1064 aa).

The short motif at 42 to 52 (PFATGRPHHGH) is the 'HIGH' region element. The 'KMSKS' region motif lies at 597–601 (KMSKR). Lysine 600 is an ATP binding site.

The protein belongs to the class-I aminoacyl-tRNA synthetase family.

It is found in the cytoplasm. It catalyses the reaction tRNA(Ile) + L-isoleucine + ATP = L-isoleucyl-tRNA(Ile) + AMP + diphosphate. This is Isoleucine--tRNA ligase, cytoplasmic (irs1) from Schizosaccharomyces pombe (strain 972 / ATCC 24843) (Fission yeast).